A 561-amino-acid polypeptide reads, in one-letter code: Putative transport protein YbjL (561 aa).

5 consecutive transmembrane segments (helical) span residues 8-28 (LLNGNYILLLFVVLALGLCLG), 32-52 (LGSIQLGNSIGVLVVSLLLGQ), 66-86 (FMLFIFCVGVEAGPNFFSIFF), 94-114 (MLALVMVGSALLIALGLGKLF), and 158-178 (NLSLGYALTYLIGLVSLIVGA). RCK C-terminal domains follow at residues 200-288 (RGLD…SFRN) and 292-373 (VFDR…RIGF). The next 5 membrane-spanning stretches (helical) occupy residues 383 to 403 (LLAFCAFFIIGLMIGMITFQF), 406 to 426 (FSFGIGNAAGLLFAGIMLGFL), 447 to 467 (FGLMVFMAGVGLSAGSGISNG), 475 to 495 (MLIAGLVVSLAPVVICFLFGA), and 540 to 560 (AIANVLLTLAGTLIVIIWPGL).

This sequence belongs to the AAE transporter (TC 2.A.81) family. YbjL subfamily.

It localises to the cell membrane. This chain is Putative transport protein YbjL, found in Salmonella arizonae (strain ATCC BAA-731 / CDC346-86 / RSK2980).